The chain runs to 728 residues: Phosphoribosylformylglycinamidine synthase subunit PurL (728 aa).

His-42 is an active-site residue. 2 residues coordinate ATP: Tyr-45 and Lys-84. Glu-86 serves as a coordination point for Mg(2+). Residues 87-90 (SHNH) and Arg-109 each bind substrate. Catalysis depends on His-88, which acts as the Proton acceptor. Residue Asp-110 participates in Mg(2+) binding. Gln-237 contributes to the substrate binding site. Asp-265 contacts Mg(2+). 309–311 (ESQ) contacts substrate. ATP-binding residues include Asp-491 and Gly-528. Asn-529 lines the Mg(2+) pocket. Ser-531 contributes to the substrate binding site.

This sequence belongs to the FGAMS family. In terms of assembly, monomer. Part of the FGAM synthase complex composed of 1 PurL, 1 PurQ and 2 PurS subunits.

Its subcellular location is the cytoplasm. The enzyme catalyses N(2)-formyl-N(1)-(5-phospho-beta-D-ribosyl)glycinamide + L-glutamine + ATP + H2O = 2-formamido-N(1)-(5-O-phospho-beta-D-ribosyl)acetamidine + L-glutamate + ADP + phosphate + H(+). The protein operates within purine metabolism; IMP biosynthesis via de novo pathway; 5-amino-1-(5-phospho-D-ribosyl)imidazole from N(2)-formyl-N(1)-(5-phospho-D-ribosyl)glycinamide: step 1/2. Functionally, part of the phosphoribosylformylglycinamidine synthase complex involved in the purines biosynthetic pathway. Catalyzes the ATP-dependent conversion of formylglycinamide ribonucleotide (FGAR) and glutamine to yield formylglycinamidine ribonucleotide (FGAM) and glutamate. The FGAM synthase complex is composed of three subunits. PurQ produces an ammonia molecule by converting glutamine to glutamate. PurL transfers the ammonia molecule to FGAR to form FGAM in an ATP-dependent manner. PurS interacts with PurQ and PurL and is thought to assist in the transfer of the ammonia molecule from PurQ to PurL. This Campylobacter jejuni (strain RM1221) protein is Phosphoribosylformylglycinamidine synthase subunit PurL.